The following is a 796-amino-acid chain: Protein SEY1 homolog (796 aa).

Residues 1–701 (MESSNDFSNK…AGTSISSWRN (701 aa)) lie on the Cytoplasmic side of the membrane. The GB1/RHD3-type G domain maps to 46–280 (GFRFNVVTIL…VPSDGFFVYS (235 aa)). Position 56 to 63 (56 to 63 (GSQSSGKS)) interacts with GTP. Residues 554–626 (SLVLLLKAAR…DALTLLKVLK (73 aa)) adopt a coiled-coil conformation. The chain crosses the membrane as a helical span at residues 702-722 (IPPIFWLVLLVLGWNELRSVF). Residues 723-725 (KVL) are Lumenal-facing. Residues 726–746 (LRFYVVIPLLIVFYFTFSYSA) traverse the membrane as a helical segment. Residues 747 to 796 (TKLLGPKADQYVKPVRDKVLSLFTALLAWFVRTLHMIASKSSSFKQRPAT) lie on the Cytoplasmic side of the membrane.

The protein belongs to the TRAFAC class dynamin-like GTPase superfamily. GB1/RHD3 GTPase family. RHD3 subfamily.

Its subcellular location is the endoplasmic reticulum membrane. Its function is as follows. Probable GTP-binding protein that may be involved in cell development. The sequence is that of Protein SEY1 homolog from Theileria parva (East coast fever infection agent).